The sequence spans 206 residues: Cytidylate kinase (206 aa).

9-17 lines the ATP pocket; it reads GPAAAGKGT. Positions 155–168 are enriched in basic and acidic residues; it reads LRERDRRDREREAA. A disordered region spans residues 155 to 174; the sequence is LRERDRRDREREAAPLRPAP.

Belongs to the cytidylate kinase family. Type 1 subfamily.

The protein localises to the cytoplasm. It catalyses the reaction CMP + ATP = CDP + ADP. The enzyme catalyses dCMP + ATP = dCDP + ADP. This chain is Cytidylate kinase, found in Cereibacter sphaeroides (strain KD131 / KCTC 12085) (Rhodobacter sphaeroides).